The following is a 154-amino-acid chain: UPF0225 protein Asuc_0343 (154 aa).

The protein belongs to the UPF0225 family.

In Actinobacillus succinogenes (strain ATCC 55618 / DSM 22257 / CCUG 43843 / 130Z), this protein is UPF0225 protein Asuc_0343.